The following is a 222-amino-acid chain: Charged multivesicular body protein 4b (222 aa).

2 disordered regions span residues Met-1 to Gln-21 and Gly-183 to Ala-222. The stretch at Gln-21–Gln-182 forms a coiled coil. A compositionally biased stretch (low complexity) spans Pro-188 to Lys-200.

This sequence belongs to the SNF7 family. As to quaternary structure, probable core component of the endosomal sorting required for transport complex III (ESCRT-III). ESCRT-III components are thought to multimerize to form a flat lattice on the perimeter membrane of the endosome.

It localises to the cytoplasm. Its subcellular location is the cytosol. It is found in the late endosome membrane. The protein resides in the midbody. Its function is as follows. Probable core component of the endosomal sorting required for transport complex III (ESCRT-III) which is involved in multivesicular bodies (MVBs) formation and sorting of endosomal cargo proteins into MVBs. MVBs contain intraluminal vesicles (ILVs) that are generated by invagination and scission from the limiting membrane of the endosome and mostly are delivered to lysosomes enabling degradation of membrane proteins, such as stimulated growth factor receptors, lysosomal enzymes and lipids. This Xenopus tropicalis (Western clawed frog) protein is Charged multivesicular body protein 4b (chmp4b).